An 891-amino-acid polypeptide reads, in one-letter code: Protein translocase subunit SecA 1 (891 aa).

Residues glutamine 85, 103–107 (GEGKT), and aspartate 491 each bind ATP. Zn(2+)-binding residues include cysteine 877, cysteine 879, cysteine 888, and cysteine 889.

Belongs to the SecA family. In terms of assembly, monomer and homodimer. Part of the essential Sec protein translocation apparatus which comprises SecA, SecYEG and auxiliary proteins SecDF. Other proteins may also be involved. Zn(2+) is required as a cofactor.

Its subcellular location is the cell membrane. The protein localises to the cytoplasm. It carries out the reaction ATP + H2O + cellular proteinSide 1 = ADP + phosphate + cellular proteinSide 2.. Its function is as follows. Part of the Sec protein translocase complex. Interacts with the SecYEG preprotein conducting channel. Has a central role in coupling the hydrolysis of ATP to the transfer of proteins into and across the cell membrane, serving as an ATP-driven molecular motor driving the stepwise translocation of polypeptide chains across the membrane. In Clostridioides difficile (strain 630) (Peptoclostridium difficile), this protein is Protein translocase subunit SecA 1.